A 268-amino-acid polypeptide reads, in one-letter code: Tryptophan synthase alpha chain (268 aa).

Residues E47 and D58 each act as proton acceptor in the active site.

This sequence belongs to the TrpA family. Tetramer of two alpha and two beta chains.

It carries out the reaction (1S,2R)-1-C-(indol-3-yl)glycerol 3-phosphate + L-serine = D-glyceraldehyde 3-phosphate + L-tryptophan + H2O. It participates in amino-acid biosynthesis; L-tryptophan biosynthesis; L-tryptophan from chorismate: step 5/5. Its function is as follows. The alpha subunit is responsible for the aldol cleavage of indoleglycerol phosphate to indole and glyceraldehyde 3-phosphate. This Chlorobium phaeobacteroides (strain BS1) protein is Tryptophan synthase alpha chain.